A 185-amino-acid chain; its full sequence is Ribosome-recycling factor (185 aa).

Belongs to the RRF family.

Its subcellular location is the cytoplasm. Its function is as follows. Responsible for the release of ribosomes from messenger RNA at the termination of protein biosynthesis. May increase the efficiency of translation by recycling ribosomes from one round of translation to another. In Nitrosospira multiformis (strain ATCC 25196 / NCIMB 11849 / C 71), this protein is Ribosome-recycling factor.